A 370-amino-acid polypeptide reads, in one-letter code: Psilocybin cluster transcription regulator (370 aa).

Disordered regions lie at residues 1–39 and 102–221; these read MAPTTPATHDPALSHGAPPTQGSQAPANAAPNLTPADIS and YQTG…RRRR. The segment covering 143 to 152 has biased composition (polar residues); that stretch reads IQHQDQQQSG. The segment covering 183-202 has biased composition (low complexity); that stretch reads TSTSTPSGGRRGGRSATMGS. Basic and acidic residues predominate over residues 204–218; that stretch reads EWSRQRKDNHKEVER. The tract at residues 208–221 is basic motif; that stretch reads QRKDNHKEVERRRR. One can recognise a bHLH domain in the interval 208-258; that stretch reads QRKDNHKEVERRRRGNINEGINELGRIVPSGSGEKAKGAILSRAVQYIHHL. The tract at residues 222 to 258 is helix-loop-helix motif; it reads GNINEGINELGRIVPSGSGEKAKGAILSRAVQYIHHL. The interval 317 to 370 is disordered; the sequence is VSTAGAGSGAAKDESAAGTKRRSTDGADAAGTNVEGGNNDNAEGERDGKRQRTE. Residues 359-370 show a composition bias toward basic and acidic residues; the sequence is EGERDGKRQRTE.

The protein localises to the nucleus. Transcription factor that may regulate the expression of the gene cluster that mediates the biosynthesis of psilocybin, a psychotropic tryptamine-derived natural product. This chain is Psilocybin cluster transcription regulator, found in Psilocybe cyanescens.